The chain runs to 288 residues: Undecaprenyl-diphosphatase (288 aa).

The next 8 membrane-spanning stretches (helical) occupy residues 11–31 (LDLW…FLPI), 49–69 (PGVA…LSYF), 94–114 (AQMG…GLLI), 129–149 (LAAI…AEQL), 159–179 (LRLA…IPGV), 199–219 (AARF…LVEL), 234–254 (VLAI…AWLL), and 265–285 (FVVY…TGTL).

The protein belongs to the UppP family.

The protein localises to the cell inner membrane. It carries out the reaction di-trans,octa-cis-undecaprenyl diphosphate + H2O = di-trans,octa-cis-undecaprenyl phosphate + phosphate + H(+). Functionally, catalyzes the dephosphorylation of undecaprenyl diphosphate (UPP). Confers resistance to bacitracin. In Synechococcus elongatus (strain ATCC 33912 / PCC 7942 / FACHB-805) (Anacystis nidulans R2), this protein is Undecaprenyl-diphosphatase.